The chain runs to 606 residues: DNA mismatch repair protein MutL (606 aa).

The disordered stretch occupies residues 350–371; sequence GWRPSAPSAPWTPEASPSRPYQ.

It belongs to the DNA mismatch repair MutL/HexB family.

Functionally, this protein is involved in the repair of mismatches in DNA. It is required for dam-dependent methyl-directed DNA mismatch repair. May act as a 'molecular matchmaker', a protein that promotes the formation of a stable complex between two or more DNA-binding proteins in an ATP-dependent manner without itself being part of a final effector complex. This is DNA mismatch repair protein MutL from Rhizobium rhizogenes (strain K84 / ATCC BAA-868) (Agrobacterium radiobacter).